A 119-amino-acid polypeptide reads, in one-letter code: FAD-linked sulfhydryl oxidase (119 aa).

Residues 1–97 (MLHWGPKYWR…ISWSEYKNIY (97 aa)) form the ERV/ALR sulfhydryl oxidase domain. Residues cysteine 44 and cysteine 47 are joined by a disulfide bond.

This sequence belongs to the asfivirus B119L family. Interacts with A151R. The cofactor is FAD.

Its subcellular location is the host cytoplasm. It is found in the virion. The enzyme catalyses 2 R'C(R)SH + O2 = R'C(R)S-S(R)CR' + H2O2. In terms of biological role, FAD-dependent sulfhydryl oxidase that catalyzes the formation of disulfide bonds in viral proteins produced in the cell cytoplasm. Involved in virion maturation. This African swine fever virus (isolate Warthog/Namibia/Wart80/1980) (ASFV) protein is FAD-linked sulfhydryl oxidase.